The primary structure comprises 679 residues: Methyl-accepting chemotaxis protein McpB (679 aa).

3 divergent domain HAMP regions span residues 8–56 (AVAQ…RQLR), 63–112 (QQVE…AAHI), and 111–156 (HIAV…ERLR). Residues 171 to 213 (YNARIKSALDNVSANVMIADNDLNIIYMNRTVSEMLGRAEADI) form the PAS domain. Heme is bound at residue H234. Positions 285–287 (DRT) match the DxT. Important for signal propagation motif. The divergent domain HAMP 4 stretch occupies residues 289-332 (EHRAEQEVSQLVQAAAAGDFSKRVEEAGKEGFFLRLAKDLNSLV). The HAMP 5 domain maps to 333–385 (DTADRGLRDVSRMLGALAQGDLTQRIEADYQGTFGQLKDFSNDTAQSLSRMLG). Residues 390 to 619 (AADTINTAAS…EAAAAAEAMQ (230 aa)) enclose the Methyl-accepting transducer domain. Disordered regions lie at residues 405–425 (NAEL…TASS) and 644–679 (ASAR…WEEF). Residues 411-425 (RTEQQASSLEETASS) show a composition bias toward polar residues. Residues 670-679 (ARKEDGWEEF) show a composition bias toward basic and acidic residues. The GWEEF pentapeptide. Important for methylation by CheR2 signature appears at 675–679 (GWEEF).

It belongs to the methyl-accepting chemotaxis (MCP) protein family. In terms of assembly, homodimer. The PAS domains form dimers in the presence and absence of oxygen. Interacts with the methyltransferase CheR2 via the C-terminal McpB pentapeptide GWEEF. Interacts with the methylesterase/gutaminase CheB2, which also binds to the GWEEF pentapeptide. Methylated by CheR2, but not by CheR1, CheR3 or WspC. Demethylated by CheB2. In vitro, can be methylated by E.coli CheR.

The protein localises to the cytoplasm. Its function is as follows. Chemoreceptor that plays a critical role in the virulence and pathogenesis of P.aeruginosa in a variety of hosts. Probably acts through oxygen sensing. Uses a heme-based sensor. Could be involved in chemotaxis. When expressed in E.coli, is able to sense and mediate repellent responses to oxygen, carbon monoxide and nitric oxide. The polypeptide is Methyl-accepting chemotaxis protein McpB (Pseudomonas aeruginosa (strain ATCC 15692 / DSM 22644 / CIP 104116 / JCM 14847 / LMG 12228 / 1C / PRS 101 / PAO1)).